The chain runs to 182 residues: UPF0398 protein RBAM_020340 (182 aa).

It belongs to the UPF0398 family.

The protein is UPF0398 protein RBAM_020340 of Bacillus velezensis (strain DSM 23117 / BGSC 10A6 / LMG 26770 / FZB42) (Bacillus amyloliquefaciens subsp. plantarum).